Reading from the N-terminus, the 116-residue chain is Alpha-amylase inhibitor 5 (116 aa).

Disulfide bonds link cysteine 4–cysteine 55, cysteine 18–cysteine 44, cysteine 27–cysteine 77, cysteine 45–cysteine 95, and cysteine 57–cysteine 106.

This sequence belongs to the protease inhibitor I6 (cereal trypsin/alpha-amylase inhibitor) family.

The protein resides in the secreted. Functionally, alpha-amylase inhibitor. The chain is Alpha-amylase inhibitor 5 from Sorghum bicolor (Sorghum).